A 442-amino-acid chain; its full sequence is uncharacterized protein (442 aa).

One can recognise an ABC transporter domain in the interval 1–238; sequence MKAEGLSGGY…QSIKAVYDTD (238 aa). 33–40 lines the ATP pocket; it reads GPNGSGKT.

Belongs to the ABC transporter superfamily. In terms of assembly, the complex is composed of two ATP-binding proteins (YvrA), two transmembrane proteins (YvrB) and a solute-binding protein (YvrC).

In terms of biological role, probably part of an ABC transporter complex. Probably responsible for energy coupling to the transport system. This is an uncharacterized protein from Bacillus subtilis (strain 168).